Consider the following 143-residue polypeptide: Transcriptional regulator SlyA (143 aa).

The region spanning 2-135 (ESTLGSDLAR…LSTLVQKLEQ (134 aa)) is the HTH marR-type domain. Residues 49-72 (QIQLAKAIGIEQPSLVRTLDQLEE) constitute a DNA-binding region (H-T-H motif).

It belongs to the SlyA family. As to quaternary structure, homodimer.

Functionally, transcription regulator that can specifically activate or repress expression of target genes. Regulates the cpm operon, which contains cpmA, cpmB, cpmC, cpmD, cpmE, cpmF, cpmG and cpmH, involved in carbapenem-like antibiotic production. The polypeptide is Transcriptional regulator SlyA (Photorhabdus laumondii subsp. laumondii (strain DSM 15139 / CIP 105565 / TT01) (Photorhabdus luminescens subsp. laumondii)).